Consider the following 125-residue polypeptide: MGFIDGLLGNASTLSTAAVQEELAHILLEGEKVEAAFKLVRDLIVFTDKRLILVDKQGITGKKTEFQSIPYKSISRFSVETAGRFDLDSELKIWISGAELPAVSKQFKKDESIYDIQKVLAAVCM.

This is an uncharacterized protein from Bacillus subtilis (strain 168).